The sequence spans 879 residues: Valine--tRNA ligase (879 aa).

The 'HIGH' region signature appears at 45 to 55; that stretch reads PNVTGKLHLGH. Residues 521–525 carry the 'KMSKS' region motif; that stretch reads KMSKS. K524 contacts ATP. Residues 806 to 879 are a coiled coil; it reads LTELVNVDEE…ERIQDLKESK (74 aa).

Belongs to the class-I aminoacyl-tRNA synthetase family. ValS type 1 subfamily. Monomer.

It localises to the cytoplasm. It catalyses the reaction tRNA(Val) + L-valine + ATP = L-valyl-tRNA(Val) + AMP + diphosphate. Catalyzes the attachment of valine to tRNA(Val). As ValRS can inadvertently accommodate and process structurally similar amino acids such as threonine, to avoid such errors, it has a 'posttransfer' editing activity that hydrolyzes mischarged Thr-tRNA(Val) in a tRNA-dependent manner. The chain is Valine--tRNA ligase from Lactobacillus acidophilus (strain ATCC 700396 / NCK56 / N2 / NCFM).